A 145-amino-acid polypeptide reads, in one-letter code: D-aminoacyl-tRNA deacylase (145 aa).

The Gly-cisPro motif, important for rejection of L-amino acids signature appears at 137-138 (GP).

The protein belongs to the DTD family. In terms of assembly, homodimer.

The protein localises to the cytoplasm. The catalysed reaction is glycyl-tRNA(Ala) + H2O = tRNA(Ala) + glycine + H(+). The enzyme catalyses a D-aminoacyl-tRNA + H2O = a tRNA + a D-alpha-amino acid + H(+). An aminoacyl-tRNA editing enzyme that deacylates mischarged D-aminoacyl-tRNAs. Also deacylates mischarged glycyl-tRNA(Ala), protecting cells against glycine mischarging by AlaRS. Acts via tRNA-based rather than protein-based catalysis; rejects L-amino acids rather than detecting D-amino acids in the active site. By recycling D-aminoacyl-tRNA to D-amino acids and free tRNA molecules, this enzyme counteracts the toxicity associated with the formation of D-aminoacyl-tRNA entities in vivo and helps enforce protein L-homochirality. This chain is D-aminoacyl-tRNA deacylase, found in Yersinia enterocolitica serotype O:8 / biotype 1B (strain NCTC 13174 / 8081).